Consider the following 196-residue polypeptide: Pyridoxal 5'-phosphate synthase subunit PdxT (196 aa).

An L-glutamine-binding site is contributed by 46–48; that stretch reads GES. Cys-78 functions as the Nucleophile in the catalytic mechanism. Residues Arg-105 and 133–134 contribute to the L-glutamine site; that span reads IR. Residues His-169 and Glu-171 each act as charge relay system in the active site.

Belongs to the glutaminase PdxT/SNO family. As to quaternary structure, in the presence of PdxS, forms a dodecamer of heterodimers. Only shows activity in the heterodimer.

It carries out the reaction aldehydo-D-ribose 5-phosphate + D-glyceraldehyde 3-phosphate + L-glutamine = pyridoxal 5'-phosphate + L-glutamate + phosphate + 3 H2O + H(+). The catalysed reaction is L-glutamine + H2O = L-glutamate + NH4(+). Its pathway is cofactor biosynthesis; pyridoxal 5'-phosphate biosynthesis. In terms of biological role, catalyzes the hydrolysis of glutamine to glutamate and ammonia as part of the biosynthesis of pyridoxal 5'-phosphate. The resulting ammonia molecule is channeled to the active site of PdxS. In Geobacillus kaustophilus (strain HTA426), this protein is Pyridoxal 5'-phosphate synthase subunit PdxT.